A 419-amino-acid polypeptide reads, in one-letter code: Histidine--tRNA ligase (419 aa).

The protein belongs to the class-II aminoacyl-tRNA synthetase family. In terms of assembly, homodimer.

It localises to the cytoplasm. The catalysed reaction is tRNA(His) + L-histidine + ATP = L-histidyl-tRNA(His) + AMP + diphosphate + H(+). This chain is Histidine--tRNA ligase, found in Novosphingobium aromaticivorans (strain ATCC 700278 / DSM 12444 / CCUG 56034 / CIP 105152 / NBRC 16084 / F199).